The chain runs to 1408 residues: ABC multidrug transporter MDR1 (1408 aa).

Positions 79 to 88 (IAASSDTLRN) are enriched in polar residues. Residues 79-102 (IAASSDTLRNSPLEKPISNAFSKS) are disordered. Transmembrane regions (helical) follow at residues 147-167 (FAAP…VAAG) and 223-243 (LYLM…MFIW). One can recognise an ABC transmembrane type-1 1 domain in the interval 157–464 (VLGLVLAVAA…LAPELAAVTK (308 aa)). Asn244 carries N-linked (GlcNAc...) asparagine glycosylation. A run of 4 helical transmembrane segments spans residues 296–316 (KVAL…LAFV), 321–341 (LAGA…IMMT), 408–428 (IMFF…GILV), and 436–456 (GIVI…AMLA). In terms of domain architecture, ABC transporter 1 spans 499–744 (ISFENVKFHY…ENGPYAQLVN (246 aa)). 534–541 (GASGSGKS) provides a ligand contact to ATP. Asn606 is a glycosylation site (N-linked (GlcNAc...) asparagine). 2 consecutive transmembrane segments (helical) span residues 838 to 858 (IIAF…AILF) and 882 to 902 (LWYF…SAGF). Residues 838 to 1125 (IIAFIAAICA…VFTFVPDASK (288 aa)) enclose the ABC transmembrane type-1 2 domain. N-linked (GlcNAc...) asparagine glycosylation occurs at Asn934. Transmembrane regions (helical) follow at residues 952–972 (GLFG…IGGC), 981–999 (LLAL…GGYI), 1072–1092 (GLTF…IIDA), and 1099–1119 (FYTV…VFTF). 2 N-linked (GlcNAc...) asparagine glycosylation sites follow: Asn1127 and Asn1182. One can recognise an ABC transporter 2 domain in the interval 1162–1402 (VRIEGVHFRY…KGGYYELVQM (241 aa)). 1197–1204 (GPSGCGKS) serves as a coordination point for ATP. Asn1404 is a glycosylation site (N-linked (GlcNAc...) asparagine).

It belongs to the ABC transporter superfamily. ABCB family. Multidrug resistance exporter (TC 3.A.1.201) subfamily.

Its subcellular location is the cell membrane. The catalysed reaction is itraconazole(in) + ATP + H2O = itraconazole(out) + ADP + phosphate + H(+). The enzyme catalyses voriconazole(in) + ATP + H2O = voriconazole(out) + ADP + phosphate + H(+). It catalyses the reaction fluconazole(in) + ATP + H2O = fluconazole(out) + ADP + phosphate + H(+). In terms of biological role, pleiotropic ABC efflux transporter that confers resistance to structurally and functionally unrelated compounds including azoles such as fluconazole (FLC), itraconazole (ITC), posaconazole (POS), and voriconazole (VRC). This chain is ABC multidrug transporter MDR1, found in Cryptococcus neoformans var. grubii serotype A (strain H99 / ATCC 208821 / CBS 10515 / FGSC 9487) (Filobasidiella neoformans var. grubii).